A 368-amino-acid chain; its full sequence is tRNA 2-selenouridine synthase (368 aa).

The Rhodanese domain maps to 15-138 (FLNQHPIMDV…MRQYLIGVIE (124 aa)). The active-site S-selanylcysteine intermediate is Cys98.

It belongs to the SelU family. In terms of assembly, monomer.

The catalysed reaction is 5-methylaminomethyl-2-thiouridine(34) in tRNA + selenophosphate + (2E)-geranyl diphosphate + H2O + H(+) = 5-methylaminomethyl-2-selenouridine(34) in tRNA + (2E)-thiogeraniol + phosphate + diphosphate. The enzyme catalyses 5-methylaminomethyl-2-thiouridine(34) in tRNA + (2E)-geranyl diphosphate = 5-methylaminomethyl-S-(2E)-geranyl-thiouridine(34) in tRNA + diphosphate. It carries out the reaction 5-methylaminomethyl-S-(2E)-geranyl-thiouridine(34) in tRNA + selenophosphate + H(+) = 5-methylaminomethyl-2-(Se-phospho)selenouridine(34) in tRNA + (2E)-thiogeraniol. It catalyses the reaction 5-methylaminomethyl-2-(Se-phospho)selenouridine(34) in tRNA + H2O = 5-methylaminomethyl-2-selenouridine(34) in tRNA + phosphate. Its function is as follows. Involved in the post-transcriptional modification of the uridine at the wobble position (U34) of tRNA(Lys), tRNA(Glu) and tRNA(Gln). Catalyzes the conversion of 2-thiouridine (S2U-RNA) to 2-selenouridine (Se2U-RNA). Acts in a two-step process involving geranylation of 2-thiouridine (S2U) to S-geranyl-2-thiouridine (geS2U) and subsequent selenation of the latter derivative to 2-selenouridine (Se2U) in the tRNA chain. This chain is tRNA 2-selenouridine synthase, found in Shewanella baltica (strain OS185).